We begin with the raw amino-acid sequence, 37 residues long: Cytochrome b6-f complex subunit 5 (37 aa).

A helical transmembrane segment spans residues 5–25; the sequence is LPSGIVLGLIPITLAGLFVTA.

It belongs to the PetG family. As to quaternary structure, the 4 large subunits of the cytochrome b6-f complex are cytochrome b6, subunit IV (17 kDa polypeptide, PetD), cytochrome f and the Rieske protein, while the 4 small subunits are PetG, PetL, PetM and PetN. The complex functions as a dimer.

It localises to the plastid. Its subcellular location is the chloroplast thylakoid membrane. Component of the cytochrome b6-f complex, which mediates electron transfer between photosystem II (PSII) and photosystem I (PSI), cyclic electron flow around PSI, and state transitions. PetG is required for either the stability or assembly of the cytochrome b6-f complex. This Pinus thunbergii (Japanese black pine) protein is Cytochrome b6-f complex subunit 5.